Here is a 487-residue protein sequence, read N- to C-terminus: Glycogen synthase (487 aa).

Lys-23 provides a ligand contact to ADP-alpha-D-glucose.

Belongs to the glycosyltransferase 1 family. Bacterial/plant glycogen synthase subfamily.

The enzyme catalyses [(1-&gt;4)-alpha-D-glucosyl](n) + ADP-alpha-D-glucose = [(1-&gt;4)-alpha-D-glucosyl](n+1) + ADP + H(+). The protein operates within glycan biosynthesis; glycogen biosynthesis. Functionally, synthesizes alpha-1,4-glucan chains using ADP-glucose. The protein is Glycogen synthase of Pseudomonas fluorescens (strain Pf0-1).